Reading from the N-terminus, the 662-residue chain is Glycogen debranching enzyme (662 aa).

The active-site Nucleophile is the D338. Residue E373 is the Proton donor of the active site.

The protein belongs to the glycosyl hydrolase 13 family.

The enzyme catalyses Hydrolysis of (1-&gt;6)-alpha-D-glucosidic linkages to branches with degrees of polymerization of three or four glucose residues in limit dextrin.. It functions in the pathway glycan degradation; glycogen degradation. Its function is as follows. Removes maltotriose and maltotetraose chains that are attached by 1,6-alpha-linkage to the limit dextrin main chain, generating a debranched limit dextrin. This chain is Glycogen debranching enzyme, found in Yersinia pseudotuberculosis serotype I (strain IP32953).